We begin with the raw amino-acid sequence, 65 residues long: Large ribosomal subunit protein bL35 (65 aa).

It belongs to the bacterial ribosomal protein bL35 family.

This Paraburkholderia phytofirmans (strain DSM 17436 / LMG 22146 / PsJN) (Burkholderia phytofirmans) protein is Large ribosomal subunit protein bL35.